We begin with the raw amino-acid sequence, 462 residues long: Glutamate decarboxylase alpha (462 aa).

N6-(pyridoxal phosphate)lysine is present on K273.

The protein belongs to the group II decarboxylase family. It depends on pyridoxal 5'-phosphate as a cofactor.

The enzyme catalyses L-glutamate + H(+) = 4-aminobutanoate + CO2. Its function is as follows. Converts internalized glutamate to GABA and increases the internal pH. Involved in glutamate-dependent acid resistance in gastric fluid. The polypeptide is Glutamate decarboxylase alpha (gadA) (Listeria monocytogenes serovar 1/2a (strain ATCC BAA-679 / EGD-e)).